Consider the following 155-residue polypeptide: Putative pre-16S rRNA nuclease (155 aa).

It belongs to the YqgF nuclease family.

It is found in the cytoplasm. Its function is as follows. Could be a nuclease involved in processing of the 5'-end of pre-16S rRNA. This chain is Putative pre-16S rRNA nuclease, found in Xanthomonas campestris pv. campestris (strain B100).